Reading from the N-terminus, the 553-residue chain is Dihydrolipoyllysine-residue acetyltransferase component of pyruvate dehydrogenase complex (553 aa).

Residues 2-77 (AFSVQMPALG…EVGGELAVIG (76 aa)) enclose the Lipoyl-binding 1 domain. An N6-lipoyllysine modification is found at K43. The interval 81 to 125 (DAGEAAAPAPEKVPAAQPESKPAPEPPPVQPTSGAPAGGDAKPVL) is disordered. A compositionally biased stretch (low complexity) spans 84 to 100 (EAAAPAPEKVPAAQPES). Positions 101 to 110 (KPAPEPPPVQ) are enriched in pro residues. The Lipoyl-binding 2 domain maps to 121–196 (AKPVLMPELG…PVGGELARIG (76 aa)). Residue K162 is modified to N6-lipoyllysine. Disordered regions lie at residues 204–238 (APAPKPAPKPVPEPAPTPKAEPAPSPPAAQPAGAA) and 278–321 (AAAE…TQKA). The span at 206 to 232 (APKPAPKPVPEPAPTPKAEPAPSPPAA) shows a compositional bias: pro residues. The region spanning 243-280 (YVTPLVRKLASENNIDLAGVTGTGVGGRIRKQDVLAAA) is the Peripheral subunit-binding (PSBD) domain. Over residues 288-300 (APAPAAQAAAAPA) the composition is skewed to low complexity. Active-site residues include H523 and D527.

This sequence belongs to the 2-oxoacid dehydrogenase family. As to quaternary structure, forms a 24-polypeptide structural core with octahedral symmetry. Part of the PDH complex, consisting of multiple copies of AceE (E1), DlaT (E2) and Lpd (E3). (R)-lipoate serves as cofactor.

It catalyses the reaction N(6)-[(R)-dihydrolipoyl]-L-lysyl-[protein] + acetyl-CoA = N(6)-[(R)-S(8)-acetyldihydrolipoyl]-L-lysyl-[protein] + CoA. Its function is as follows. Component of the pyruvate dehydrogenase (PDH) complex, that catalyzes the overall conversion of pyruvate to acetyl-CoA and CO(2). The chain is Dihydrolipoyllysine-residue acetyltransferase component of pyruvate dehydrogenase complex (dlaT) from Mycobacterium bovis (strain ATCC BAA-935 / AF2122/97).